The chain runs to 142 residues: Clock-controlled protein 6 (142 aa).

It belongs to the SED1 family.

This Neurospora crassa (strain ATCC 24698 / 74-OR23-1A / CBS 708.71 / DSM 1257 / FGSC 987) protein is Clock-controlled protein 6 (ccg-6).